We begin with the raw amino-acid sequence, 159 residues long: SsrA-binding protein (159 aa).

It belongs to the SmpB family.

It is found in the cytoplasm. Its function is as follows. Required for rescue of stalled ribosomes mediated by trans-translation. Binds to transfer-messenger RNA (tmRNA), required for stable association of tmRNA with ribosomes. tmRNA and SmpB together mimic tRNA shape, replacing the anticodon stem-loop with SmpB. tmRNA is encoded by the ssrA gene; the 2 termini fold to resemble tRNA(Ala) and it encodes a 'tag peptide', a short internal open reading frame. During trans-translation Ala-aminoacylated tmRNA acts like a tRNA, entering the A-site of stalled ribosomes, displacing the stalled mRNA. The ribosome then switches to translate the ORF on the tmRNA; the nascent peptide is terminated with the 'tag peptide' encoded by the tmRNA and targeted for degradation. The ribosome is freed to recommence translation, which seems to be the essential function of trans-translation. This Coxiella burnetii (strain CbuG_Q212) (Coxiella burnetii (strain Q212)) protein is SsrA-binding protein.